Here is a 249-residue protein sequence, read N- to C-terminus: Type III pantothenate kinase (249 aa).

Residue 6–13 (DVGNTHTT) coordinates ATP. 101–104 (GADR) is a substrate binding site. The Proton acceptor role is filled by D103. D123 is a K(+) binding site. Residue T126 participates in ATP binding. Residue T177 coordinates substrate.

It belongs to the type III pantothenate kinase family. In terms of assembly, homodimer. The cofactor is NH4(+). K(+) serves as cofactor.

The protein localises to the cytoplasm. The catalysed reaction is (R)-pantothenate + ATP = (R)-4'-phosphopantothenate + ADP + H(+). Its pathway is cofactor biosynthesis; coenzyme A biosynthesis; CoA from (R)-pantothenate: step 1/5. Functionally, catalyzes the phosphorylation of pantothenate (Pan), the first step in CoA biosynthesis. This Thermosipho africanus (strain TCF52B) protein is Type III pantothenate kinase.